The chain runs to 29 residues: MDIISLGWSSLLVVFTFSLSLVVWGRNGF.

Residues 3-23 (IISLGWSSLLVVFTFSLSLVV) form a helical membrane-spanning segment.

This sequence belongs to the PetN family. The 4 large subunits of the cytochrome b6-f complex are cytochrome b6, subunit IV (17 kDa polypeptide, PetD), cytochrome f and the Rieske protein, while the 4 small subunits are PetG, PetL, PetM and PetN. The complex functions as a dimer.

It localises to the plastid. The protein localises to the chloroplast thylakoid membrane. Its function is as follows. Component of the cytochrome b6-f complex, which mediates electron transfer between photosystem II (PSII) and photosystem I (PSI), cyclic electron flow around PSI, and state transitions. The polypeptide is Cytochrome b6-f complex subunit 8 (Rhodomonas salina (Cryptomonas salina)).